Consider the following 340-residue polypeptide: Leucine-rich repeat-containing protein 23 (340 aa).

Residues 1–27 (MSDEDDVDDVDAEQDEVESDKEIEEWE) show a composition bias toward acidic residues. The tract at residues 1–38 (MSDEDDVDDVDAEQDEVESDKEIEEWEDYRKETEEASE) is disordered. LRR repeat units follow at residues 89-110 (HLRY…NSLT), 111-134 (HLLW…PYLQ), 177-197 (SLHT…IYLP), 198-219 (KLKN…ENLS), 220-241 (NLTT…SQEM), and 243-264 (SLQY…AKLR). Positions 205-340 (AQNLLKKVEG…QDMEPYLPPV (136 aa)) are interaction with RSPH9. Positions 277 to 315 (NPCADETDYRQEALVQMAHLERLDKEFYEDDDRAEAEEI) constitute an LRRCT domain. The stretch at 305–328 (EDDDRAEAEEIRQRLKEEQDQDLD) forms a coiled coil. Positions 317–340 (QRLKEEQDQDLDPDQDMEPYLPPV) are disordered. Over residues 323–333 (QDQDLDPDQDM) the composition is skewed to acidic residues.

In terms of assembly, component of the axonemal radial spoke complex. Interacts with RSPH3A and RSPH3B. Interacts with RSPH9. In terms of tissue distribution, expressed in the testis (at protein level).

Its subcellular location is the cytoplasm. It localises to the cytoskeleton. The protein localises to the flagellum axoneme. Functionally, essential for sperm motility and male fertility. Plays an important role in the proper assembly of the third radial spoke (RS3) head and the bridge structure between RS2 and RS3 in the sperm flagella. This Mus musculus (Mouse) protein is Leucine-rich repeat-containing protein 23 (Lrrc23).